Consider the following 252-residue polypeptide: 5'-nucleotidase SurE (252 aa).

Positions 8, 9, 39, and 95 each coordinate a divalent metal cation.

Belongs to the SurE nucleotidase family. The cofactor is a divalent metal cation.

The protein resides in the cytoplasm. It carries out the reaction a ribonucleoside 5'-phosphate + H2O = a ribonucleoside + phosphate. Nucleotidase that shows phosphatase activity on nucleoside 5'-monophosphates. This Thermoanaerobacter sp. (strain X514) protein is 5'-nucleotidase SurE.